We begin with the raw amino-acid sequence, 293 residues long: GTPase Era (293 aa).

The Era-type G domain maps to 5 to 174 (RTISVCIIGR…ITGKAQIAPW (170 aa)). The G1 stretch occupies residues 13-20 (GRPNSGKS). 13–20 (GRPNSGKS) contributes to the GTP binding site. Residues 39–43 (QTTRS) form a G2 region. The G3 stretch occupies residues 60 to 63 (DTPG). Residues 60 to 64 (DTPGI) and 122 to 125 (NKID) contribute to the GTP site. A G4 region spans residues 122–125 (NKID). Residues 150-152 (ISA) are G5. Positions 202-279 (LQQELPYKLT…HLFLFVKVHE (78 aa)) constitute a KH type-2 domain.

Belongs to the TRAFAC class TrmE-Era-EngA-EngB-Septin-like GTPase superfamily. Era GTPase family. Monomer.

It localises to the cytoplasm. Its subcellular location is the cell inner membrane. In terms of biological role, an essential GTPase that binds both GDP and GTP, with rapid nucleotide exchange. Plays a role in 16S rRNA processing and 30S ribosomal subunit biogenesis and possibly also in cell cycle regulation and energy metabolism. This Rickettsia akari (strain Hartford) protein is GTPase Era.